Here is a 181-residue protein sequence, read N- to C-terminus: MKRIITGCLLLNFAMAAQAECNISSSIQNIDYGKRSAAMRQVDRGKTTQLADRTITLVMQCDQDAHIRVQLNTANISNNGFGFGPNGSLNLIASDAFSGSNNLDLALASGKNDNPGSTGTASISTSPNNWLVFMQNGQEVVIDSGKSVSLTLTMAPAFKDEGELTDMTDITGNLTVLVEAK.

This is an uncharacterized protein from Escherichia coli (strain K12).